The primary structure comprises 508 residues: Aromatase (508 aa).

A heme-binding site is contributed by cysteine 437.

It belongs to the cytochrome P450 family. Heme is required as a cofactor.

Its subcellular location is the membrane. The catalysed reaction is testosterone + 3 reduced [NADPH--hemoprotein reductase] + 3 O2 = 17beta-estradiol + formate + 3 oxidized [NADPH--hemoprotein reductase] + 4 H2O + 4 H(+). It carries out the reaction androst-4-ene-3,17-dione + 3 reduced [NADPH--hemoprotein reductase] + 3 O2 = estrone + formate + 3 oxidized [NADPH--hemoprotein reductase] + 4 H2O + 4 H(+). Catalyzes the formation of aromatic C18 estrogens from C19 androgens. The protein is Aromatase (Cyp19a1) of Rattus norvegicus (Rat).